A 147-amino-acid chain; its full sequence is DNA-entry nuclease (147 aa).

The chain crosses the membrane as a helical span at residues 8 to 24 (TILLVIVIIAAAAVGLI). The interval 75 to 100 (RDGAEERREQSLKDVPSKKGYDRDEW) is disordered.

The protein to B.subtilis NucB. This protein is a subunit of a 75 kDa protein complex, which governs binding and entry of donor DNA. The complex is a tetramer of two subunits of the DNA-entry nuclease and two subunits of a competence-specific protein. Only the complex is able to bind ds- and ss-DNA. The cofactor is Mn(2+).

It localises to the cell membrane. The activity can be inhibited by the 18 kDa competence-specific protein nin. By degrading DNA that enters the cell, plays a role in the competence of cells to be transformed. Degrades both double-stranded, linear and covalently closed circular DNA. The protein is DNA-entry nuclease (nucA) of Bacillus subtilis (strain 168).